Consider the following 354-residue polypeptide: tRNA N6-adenosine threonylcarbamoyltransferase (354 aa).

Fe cation-binding residues include histidine 115 and histidine 119. Residues leucine 138–glycine 142, aspartate 171, glycine 184, and asparagine 285 contribute to the substrate site. Aspartate 313 contacts Fe cation.

This sequence belongs to the KAE1 / TsaD family. Fe(2+) serves as cofactor.

It localises to the cytoplasm. It catalyses the reaction L-threonylcarbamoyladenylate + adenosine(37) in tRNA = N(6)-L-threonylcarbamoyladenosine(37) in tRNA + AMP + H(+). Functionally, required for the formation of a threonylcarbamoyl group on adenosine at position 37 (t(6)A37) in tRNAs that read codons beginning with adenine. Is involved in the transfer of the threonylcarbamoyl moiety of threonylcarbamoyl-AMP (TC-AMP) to the N6 group of A37, together with TsaE and TsaB. TsaD likely plays a direct catalytic role in this reaction. The polypeptide is tRNA N6-adenosine threonylcarbamoyltransferase (Albidiferax ferrireducens (strain ATCC BAA-621 / DSM 15236 / T118) (Rhodoferax ferrireducens)).